We begin with the raw amino-acid sequence, 381 residues long: tRNA pseudouridine synthase D (381 aa).

The Nucleophile role is filled by D81. The TRUD domain maps to 160-335 (GMPNYFGSQR…TLGSRRFFWV (176 aa)).

It belongs to the pseudouridine synthase TruD family.

The enzyme catalyses uridine(13) in tRNA = pseudouridine(13) in tRNA. In terms of biological role, responsible for synthesis of pseudouridine from uracil-13 in transfer RNAs. The protein is tRNA pseudouridine synthase D of Helicobacter pylori (strain P12).